Reading from the N-terminus, the 287-residue chain is Pyridoxal kinase PdxY (287 aa).

Substrate-binding positions include serine 10 and 45-46 (TQ). ATP-binding positions include aspartate 112, alanine 144, glutamate 149, lysine 182, and 209–212 (RPLV). Residue aspartate 224 participates in substrate binding.

Belongs to the pyridoxine kinase family. PdxY subfamily. Homodimer. The cofactor is Mg(2+).

The enzyme catalyses pyridoxal + ATP = pyridoxal 5'-phosphate + ADP + H(+). Its pathway is cofactor metabolism; pyridoxal 5'-phosphate salvage; pyridoxal 5'-phosphate from pyridoxal: step 1/1. Pyridoxal kinase involved in the salvage pathway of pyridoxal 5'-phosphate (PLP). Catalyzes the phosphorylation of pyridoxal to PLP. The protein is Pyridoxal kinase PdxY of Escherichia coli O6:H1 (strain CFT073 / ATCC 700928 / UPEC).